A 433-amino-acid chain; its full sequence is CinA-like protein (433 aa).

Belongs to the CinA family.

This chain is CinA-like protein, found in Frankia casuarinae (strain DSM 45818 / CECT 9043 / HFP020203 / CcI3).